The primary structure comprises 679 residues: DNA ligase (679 aa).

NAD(+)-binding positions include Asp-36–Asp-40 and Ser-94–Leu-95. Lys-126 functions as the N6-AMP-lysine intermediate in the catalytic mechanism. NAD(+) contacts are provided by Arg-147, Glu-181, Lys-299, and Lys-323. Cys-415, Cys-418, Cys-433, and Cys-438 together coordinate Zn(2+). One can recognise a BRCT domain in the interval Ile-603–Glu-679.

This sequence belongs to the NAD-dependent DNA ligase family. LigA subfamily. Requires Mg(2+) as cofactor. The cofactor is Mn(2+).

The catalysed reaction is NAD(+) + (deoxyribonucleotide)n-3'-hydroxyl + 5'-phospho-(deoxyribonucleotide)m = (deoxyribonucleotide)n+m + AMP + beta-nicotinamide D-nucleotide.. Its function is as follows. DNA ligase that catalyzes the formation of phosphodiester linkages between 5'-phosphoryl and 3'-hydroxyl groups in double-stranded DNA using NAD as a coenzyme and as the energy source for the reaction. It is essential for DNA replication and repair of damaged DNA. The protein is DNA ligase of Mycoplasmopsis pulmonis (strain UAB CTIP) (Mycoplasma pulmonis).